We begin with the raw amino-acid sequence, 318 residues long: Phosphatidylglycerol--prolipoprotein diacylglyceryl transferase (318 aa).

Helical transmembrane passes span 24–44 (GPST…YLLP), 60–80 (LLLL…VFEI), and 115–135 (LFSG…LFIT). Residue Arg-164 coordinates a 1,2-diacyl-sn-glycero-3-phospho-(1'-sn-glycerol). The next 2 membrane-spanning stretches (helical) occupy residues 198 to 218 (VPVW…FFYF) and 285 to 305 (GFSQ…FFIL).

Belongs to the Lgt family.

The protein resides in the cell inner membrane. It carries out the reaction L-cysteinyl-[prolipoprotein] + a 1,2-diacyl-sn-glycero-3-phospho-(1'-sn-glycerol) = an S-1,2-diacyl-sn-glyceryl-L-cysteinyl-[prolipoprotein] + sn-glycerol 1-phosphate + H(+). It functions in the pathway protein modification; lipoprotein biosynthesis (diacylglyceryl transfer). Its function is as follows. Catalyzes the transfer of the diacylglyceryl group from phosphatidylglycerol to the sulfhydryl group of the N-terminal cysteine of a prolipoprotein, the first step in the formation of mature lipoproteins. The polypeptide is Phosphatidylglycerol--prolipoprotein diacylglyceryl transferase (Leptospira interrogans serogroup Icterohaemorrhagiae serovar copenhageni (strain Fiocruz L1-130)).